The sequence spans 61 residues: Small ribosomal subunit protein uS14B (61 aa).

Cys-24, Cys-27, Cys-40, and Cys-43 together coordinate Zn(2+).

Belongs to the universal ribosomal protein uS14 family. Zinc-binding uS14 subfamily. Part of the 30S ribosomal subunit. Contacts proteins S3 and S10. Zn(2+) is required as a cofactor.

Its function is as follows. Binds 16S rRNA, required for the assembly of 30S particles and may also be responsible for determining the conformation of the 16S rRNA at the A site. In Mycolicibacterium smegmatis (strain ATCC 700084 / mc(2)155) (Mycobacterium smegmatis), this protein is Small ribosomal subunit protein uS14B.